Here is a 253-residue protein sequence, read N- to C-terminus: Probable transcriptional regulatory protein Krad_3057 (253 aa).

Belongs to the TACO1 family.

It is found in the cytoplasm. This is Probable transcriptional regulatory protein Krad_3057 from Kineococcus radiotolerans (strain ATCC BAA-149 / DSM 14245 / SRS30216).